Here is a 744-residue protein sequence, read N- to C-terminus: Serine/threonine-protein kinase GM11705 (744 aa).

Over residues 17-35 (VLSSHQPSPSATHPQSVPS) the composition is skewed to polar residues. 2 disordered regions span residues 17-38 (VLSSHQPSPSATHPQSVPSKAN) and 54-78 (NVQEDNSYNRDCDSPVSSSSEPEKE). Doublecortin domains are found at residues 154-240 (LRIK…VEYN) and 309-392 (RIVT…AEDF). The 259-residue stretch at 473–731 (YTLGRIIGDG…SEDILDHPWT (259 aa)) folds into the Protein kinase domain. ATP-binding positions include 479–487 (IGDGNFAIV) and lysine 502. Aspartate 594 serves as the catalytic Proton acceptor.

The protein belongs to the protein kinase superfamily. CAMK Ser/Thr protein kinase family. CaMK subfamily.

The enzyme catalyses L-seryl-[protein] + ATP = O-phospho-L-seryl-[protein] + ADP + H(+). It carries out the reaction L-threonyl-[protein] + ATP = O-phospho-L-threonyl-[protein] + ADP + H(+). The chain is Serine/threonine-protein kinase GM11705 from Drosophila sechellia (Fruit fly).